The chain runs to 121 residues: Small ribosomal subunit protein uS13 (121 aa).

The segment at 96 to 121 (PVRGQNTKNNARTRKGKAVAIAGKKK) is disordered. Positions 106–121 (ARTRKGKAVAIAGKKK) are enriched in basic residues.

Belongs to the universal ribosomal protein uS13 family. Part of the 30S ribosomal subunit. Forms a loose heterodimer with protein S19. Forms two bridges to the 50S subunit in the 70S ribosome.

Functionally, located at the top of the head of the 30S subunit, it contacts several helices of the 16S rRNA. In the 70S ribosome it contacts the 23S rRNA (bridge B1a) and protein L5 of the 50S subunit (bridge B1b), connecting the 2 subunits; these bridges are implicated in subunit movement. Contacts the tRNAs in the A and P-sites. This Streptococcus pyogenes serotype M3 (strain SSI-1) protein is Small ribosomal subunit protein uS13.